A 290-amino-acid polypeptide reads, in one-letter code: Probable adenylate kinase 2, chloroplastic (290 aa).

The segment covering 1-10 (MASSMAATAT) has biased composition (low complexity). The segment at 1-37 (MASSMAATATLSPPVLSAERPTVRGGLFLPPSPATSR) is disordered. The transit peptide at 1-61 (MASSMAATAT…ATRKPRSLPR (61 aa)) directs the protein to the chloroplast. 83-88 (ASGKGT) contributes to the ATP binding site. The segment at 103 to 132 (SAGDLLRAEIAAGSENGKRAKEFMEKGQLV) is NMP. Residues Arg-109, 130–132 (QLV), 159–162 (GYPR), and Gln-166 contribute to the AMP site. Residues Arg-193, Arg-197, and 206 to 207 (IY) each bind ATP. An LID region spans residues 196–229 (GRRLDPVTGKIYHLKYSPPENEEIASRLTQRFDD). Residues Arg-226 and Arg-237 each coordinate AMP.

This sequence belongs to the adenylate kinase family.

Its subcellular location is the plastid. The protein localises to the chloroplast. It carries out the reaction AMP + ATP = 2 ADP. Its function is as follows. Catalyzes the reversible transfer of the terminal phosphate group between ATP and AMP. Plays an important role in cellular energy homeostasis and in adenine nucleotide metabolism. The sequence is that of Probable adenylate kinase 2, chloroplastic from Oryza sativa subsp. japonica (Rice).